The following is a 174-amino-acid chain: MSDGSMDDDGRLFPDLGSSTHDNREIRVRFLNRCAYPVDVFWLNPSKQPTKYGTLAQKKYLDIKTFKDHPWVARRSFDGCKVLVNEKEVFWPEPAPRMNLIVRNHCVITMKVQSLREIAGRSFLRHNPTEVPNKIKGLPRELQFEVKHFLDRKQEYSEIVCRSIPPPGPQRPQQ.

The protein belongs to the VHL family. As to quaternary structure, interacts with hif-1 (hydroxylated on 'Pro-621'); the interaction induces hif-1 degradation. May be a component of the cullin E3 ubiquitin ligase complex.

It participates in protein modification; protein ubiquitination. Involved in the response to variation in environmental oxygen levels by targeting the hypoxia-inducible transcription factor hif-1 for proteasomal degradation when oxygen levels are normal (around 20%). By regulating hif-1 expression, plays a role in iron homeostasis, aging, heat acclimation and progeny size. Mediates resistance to enteropathogenic E.coli. Mediates susceptibility to B.thuringiensis pore-forming toxins. Not involved in P.aeruginosa susceptibility. The chain is von Hippel-Lindau tumor suppressor homolog from Caenorhabditis elegans.